The primary structure comprises 159 residues: Voltage-dependent N-type calcium channel subunit alpha-1B (159 aa).

A helical membrane pass occupies residues 1 to 5 (LVTEI). The stretch at 1–159 (LVTEIADTDN…LMLNLFVAVI (159 aa)) is one IV repeat. At 6 to 13 (ADTDNFIN) the chain is on the extracellular side. Residue Asn-13 is glycosylated (N-linked (GlcNAc...) asparagine). The chain crosses the membrane as a helical span at residues 14–32 (LSFLRLFRAARLIKLLRQG). The Cytoplasmic segment spans residues 33-51 (YTIRILLWTFVQSFKALPY). A helical membrane pass occupies residues 52–71 (VCLLIAMLFFIYAIIGMQVF). At 72–135 (GNIALNDETS…LTKNECGSDF (64 aa)) the chain is on the extracellular side. Residues 136–155 (AYFYFVSFIFLCSFLMLNLF) traverse the membrane as a helical segment. Residues 156–159 (VAVI) lie on the Cytoplasmic side of the membrane.

It belongs to the calcium channel alpha-1 subunit (TC 1.A.1.11) family. CACNA1B subfamily. In terms of assembly, multisubunit complex consisting of alpha-1, alpha-2, beta and delta subunits in a 1:1:1:1 ratio. The channel activity is directed by the pore-forming and voltage-sensitive alpha-1 subunit. In many cases, this subunit is sufficient to generate voltage-sensitive calcium channel activity. The auxiliary subunits beta and alpha-2/delta linked by a disulfide bridge regulate the channel activity. Interacts with RIMBP2. Phosphorylated in vitro by CaM-kinase II, PKA, PKC and CGPK.

It localises to the membrane. It catalyses the reaction Ca(2+)(in) = Ca(2+)(out). Voltage-sensitive calcium channels (VSCC) mediate the entry of calcium ions into excitable cells and are also involved in a variety of calcium-dependent processes, including muscle contraction, hormone or neurotransmitter release, gene expression, cell motility, cell division and cell death. This alpha-1B subunit gives rise to N-type calcium currents. N-type calcium channels belong to the 'high-voltage activated' (HVA) group. They are involved in pain signaling. Calcium channels containing alpha-1B subunit may play a role in directed migration of immature neurons. Mediates Ca(2+) release probability at hippocampal neuronal soma and synaptic terminals. This chain is Voltage-dependent N-type calcium channel subunit alpha-1B (CACNA1B), found in Gallus gallus (Chicken).